The following is a 698-amino-acid chain: Methionine--tRNA ligase (698 aa).

Residues 18–28 (PYANGDLHVGH) carry the 'HIGH' region motif. Zn(2+) contacts are provided by cysteine 149, cysteine 152, cysteine 161, and cysteine 165. Threonine 350 contributes to the ATP binding site. The disordered stretch occupies residues 567–590 (EAADAGDEEGEDEDEEPPAADLEP). Residues 570–584 (DAGDEEGEDEDEEPP) are compositionally biased toward acidic residues. In terms of domain architecture, tRNA-binding spans 600–698 (DFQDLDIRVA…EDAEPGTKVQ (99 aa)).

This sequence belongs to the class-I aminoacyl-tRNA synthetase family. MetG type 1 subfamily. As to quaternary structure, homodimer. Zn(2+) serves as cofactor.

The protein localises to the cytoplasm. It carries out the reaction tRNA(Met) + L-methionine + ATP = L-methionyl-tRNA(Met) + AMP + diphosphate. Is required not only for elongation of protein synthesis but also for the initiation of all mRNA translation through initiator tRNA(fMet) aminoacylation. In Natronomonas pharaonis (strain ATCC 35678 / DSM 2160 / CIP 103997 / JCM 8858 / NBRC 14720 / NCIMB 2260 / Gabara) (Halobacterium pharaonis), this protein is Methionine--tRNA ligase.